A 570-amino-acid chain; its full sequence is Hemagglutinin-neuraminidase (570 aa).

At 1–26 the chain is on the intravirion side; sequence MNRAVCQVALENDEREAKNTWRLVFR. A helical transmembrane segment spans residues 27–48; the sequence is IAILLLTVMTLAISAAALAYSM. Residues 49–570 lie on the Virion surface side of the membrane; the sequence is EASTPGDLVS…LVEILKDDGV (522 aa). Residue asparagine 119 is glycosylated (N-linked (GlcNAc...) asparagine; by host). The tract at residues 124 to 152 is important for interaction with fusion/F protein; that stretch reads GAPVHDPDYIGGIGKELIVDDTSDVTSFY. 3 cysteine pairs are disulfide-bonded: cysteine 172–cysteine 195, cysteine 185–cysteine 246, and cysteine 237–cysteine 250. Residues 233–238 form an involved in neuraminidase activity region; the sequence is NRKSCS. Asparagine 340 and asparagine 432 each carry an N-linked (GlcNAc...) asparagine; by host glycan. 2 cysteine pairs are disulfide-bonded: cysteine 343–cysteine 460 and cysteine 454–cysteine 464. N-linked (GlcNAc...) asparagine; by host glycosylation is found at asparagine 480, asparagine 507, and asparagine 537. The cysteines at positions 530 and 541 are disulfide-linked.

It belongs to the paramyxoviruses hemagglutinin-neuraminidase family. In terms of assembly, homotetramer; composed of disulfide-linked homodimers. Interacts with F protein trimer. Interacts with host CG-1B; this interaction inhibits viral adsorption and replication rather than internalization.

It localises to the virion membrane. Its subcellular location is the host cell membrane. It catalyses the reaction Hydrolysis of alpha-(2-&gt;3)-, alpha-(2-&gt;6)-, alpha-(2-&gt;8)- glycosidic linkages of terminal sialic acid residues in oligosaccharides, glycoproteins, glycolipids, colominic acid and synthetic substrates.. Functionally, mediates the viral entry into the host cell together with fusion/F protein. Attaches the virus to sialic acid-containing cell receptors and thereby initiates infection. Binding of HN protein to the receptor induces a conformational change that allows the F protein to trigger virion/cell membranes fusion. Neuraminidase activity ensures the efficient spread of the virus by dissociating the mature virions from the neuraminic acid containing glycoproteins. The chain is Hemagglutinin-neuraminidase (HN) from Gallus gallus (Chicken).